The primary structure comprises 562 residues: MOB kinase activator-like 2 (562 aa).

The interval lysine 30 to proline 50 is disordered. Over residues serine 31–glycine 45 the composition is skewed to low complexity. Positions 170, 175, 250, and 255 each coordinate Zn(2+). 3 disordered regions span residues aspartate 304–alanine 378, asparagine 468–valine 523, and glycine 538–alanine 562. 3 stretches are compositionally biased toward low complexity: residues aspartate 305–serine 349, asparagine 357–alanine 378, and asparagine 471–histidine 481. The span at leucine 482–histidine 514 shows a compositional bias: basic residues. A compositionally biased stretch (low complexity) spans alanine 547–alanine 562.

Belongs to the MOB1/phocein family. As to quaternary structure, interacts with and activates trc, also interacts with wts.

Its subcellular location is the cytoplasm. The protein localises to the nucleus. In terms of biological role, required for the normal morphogenesis of a variety of polarized outgrowths including epidermal hairs, bristles, arista laterals, and dendrites. The chain is MOB kinase activator-like 2 from Drosophila pseudoobscura pseudoobscura (Fruit fly).